A 344-amino-acid chain; its full sequence is Biotin synthase (344 aa).

Residues 40–267 (AQVQVSTLLS…KSMVRLSAGR (228 aa)) form the Radical SAM core domain. 3 residues coordinate [4Fe-4S] cluster: Cys-55, Cys-59, and Cys-62. Residues Cys-99, Cys-130, Cys-190, and Arg-262 each coordinate [2Fe-2S] cluster.

Belongs to the radical SAM superfamily. Biotin synthase family. In terms of assembly, homodimer. Requires [4Fe-4S] cluster as cofactor. [2Fe-2S] cluster is required as a cofactor.

The enzyme catalyses (4R,5S)-dethiobiotin + (sulfur carrier)-SH + 2 reduced [2Fe-2S]-[ferredoxin] + 2 S-adenosyl-L-methionine = (sulfur carrier)-H + biotin + 2 5'-deoxyadenosine + 2 L-methionine + 2 oxidized [2Fe-2S]-[ferredoxin]. The protein operates within cofactor biosynthesis; biotin biosynthesis; biotin from 7,8-diaminononanoate: step 2/2. Its function is as follows. Catalyzes the conversion of dethiobiotin (DTB) to biotin by the insertion of a sulfur atom into dethiobiotin via a radical-based mechanism. In Xanthomonas axonopodis pv. citri (strain 306), this protein is Biotin synthase.